Consider the following 285-residue polypeptide: 1,4-dihydroxy-2-naphthoyl-CoA synthase (285 aa).

Substrate-binding positions include R45, 84 to 88 (SGGDQ), Y97, 129 to 133 (YAIGG), T155, S161, Y258, and K273. Residue 154 to 156 (QTG) participates in hydrogencarbonate binding.

Belongs to the enoyl-CoA hydratase/isomerase family. MenB subfamily. The cofactor is hydrogencarbonate.

It catalyses the reaction 2-succinylbenzoyl-CoA + H(+) = 1,4-dihydroxy-2-naphthoyl-CoA + H2O. It participates in quinol/quinone metabolism; 1,4-dihydroxy-2-naphthoate biosynthesis; 1,4-dihydroxy-2-naphthoate from chorismate: step 6/7. It functions in the pathway quinol/quinone metabolism; menaquinone biosynthesis. In terms of biological role, converts o-succinylbenzoyl-CoA (OSB-CoA) to 1,4-dihydroxy-2-naphthoyl-CoA (DHNA-CoA). In Haemophilus influenzae (strain ATCC 51907 / DSM 11121 / KW20 / Rd), this protein is 1,4-dihydroxy-2-naphthoyl-CoA synthase.